The chain runs to 117 residues: Anti-sigma F factor antagonist (117 aa).

The 111-residue stretch at 3-113 (LGIDMNVKES…QSEQQALLTL (111 aa)) folds into the STAS domain. A Phosphoserine modification is found at Ser58.

The protein belongs to the anti-sigma-factor antagonist family. In terms of processing, phosphorylated by SpoIIAB on a serine residue.

In terms of biological role, in the phosphorylated form it could act as an anti-anti-sigma factor that counteracts SpoIIAB and thus releases sigma f from inhibition. This Bacillus subtilis (strain 168) protein is Anti-sigma F factor antagonist (spoIIAA).